Here is a 302-residue protein sequence, read N- to C-terminus: Heme A synthase (302 aa).

The Cytoplasmic segment spans residues 1–6 (MNKALK). The helical transmembrane segment at 7 to 27 (GLGIITTIAMLFVLIGGALVT) threads the bilayer. Over 28-61 (KTGSGMGCGRSWPLCNGSIFPALTLESIIEWSHR) the chain is Extracellular. A disulfide bridge connects residues C35 and C42. E57 is a catalytic residue. Position 60 (H60) interacts with heme o. A helical membrane pass occupies residues 62-82 (FVSGTSGVLVLALAIWTWKKI). The Cytoplasmic segment spans residues 83 to 91 (GHIRETKFL). Residues 92–112 (AVMSVVFLILQALLGAAAVVF) traverse the membrane as a helical segment. At 113–120 (GSSALIMA) the chain is on the extracellular side. Residues 121–141 (LHFGISLISFASVLLLTLLVF) traverse the membrane as a helical segment. Residue H122 participates in heme o binding. At 142–158 (EADSKQKSESFYIGKTM) the chain is on the cytoplasmic side. Residues 159–179 (QFHMIGIIIYTYVVVYTGAYV) traverse the membrane as a helical segment. Over 180–208 (RHTSSSLACLDFPMCSTENGWLPGKFHEW) the chain is Extracellular. C188 and C194 form a disulfide bridge. The helical transmembrane segment at 209-229 (VQMGHRAAALLLFAWIIAAAV) threads the bilayer. H213 lines the heme b pocket. Residues 230 to 242 (HAARQYKNQKRIY) lie on the Cytoplasmic side of the membrane. Residues 243-263 (WGWMISLILIILQAASGIAVV) traverse the membrane as a helical segment. Residues 264–272 (YSRLDLGFA) are Extracellular-facing. Residues 273 to 293 (LAHAFFISCLFGILCYFLLLV) traverse the membrane as a helical segment. H275 contributes to the heme b binding site. The Cytoplasmic segment spans residues 294-302 (ARYRRQVQK).

Belongs to the COX15/CtaA family. Type 1 subfamily. As to quaternary structure, interacts with CtaB. The cofactor is heme b.

Its subcellular location is the cell membrane. The enzyme catalyses Fe(II)-heme o + 2 A + H2O = Fe(II)-heme a + 2 AH2. It participates in porphyrin-containing compound metabolism; heme A biosynthesis; heme A from heme O: step 1/1. Its function is as follows. Catalyzes the conversion of heme O to heme A by two successive hydroxylations of the methyl group at C8. The first hydroxylation forms heme I, the second hydroxylation results in an unstable dihydroxymethyl group, which spontaneously dehydrates, resulting in the formyl group of heme A. This chain is Heme A synthase, found in Bacillus licheniformis (strain ATCC 14580 / DSM 13 / JCM 2505 / CCUG 7422 / NBRC 12200 / NCIMB 9375 / NCTC 10341 / NRRL NRS-1264 / Gibson 46).